Here is an 802-residue protein sequence, read N- to C-terminus: Acetyl-CoA decarbonylase/synthase complex subunit alpha (802 aa).

The [4Fe-4S] cluster site is built by cysteine 69, cysteine 72, cysteine 73, cysteine 75, cysteine 80, and cysteine 90. CO is bound at residue histidine 113. [Ni-4Fe-4S] cluster contacts are provided by histidine 246, cysteine 274, and cysteine 319. 4Fe-4S ferredoxin-type domains lie at 404 to 432 (EELK…ISEA) and 442 to 473 (SKFE…VIEK). Residues cysteine 413, cysteine 416, cysteine 419, cysteine 423, cysteine 451, cysteine 454, cysteine 457, and cysteine 461 each coordinate [4Fe-4S] cluster. [Ni-4Fe-4S] cluster is bound by residues cysteine 519, cysteine 548, and cysteine 583.

The protein belongs to the Ni-containing carbon monoxide dehydrogenase family. In terms of assembly, heterotetramer of two alpha and two epsilon subunits. The ACDS complex is made up of alpha, epsilon, beta, gamma and delta subunits with a probable stoichiometry of (alpha(2)epsilon(2))(4)-beta(8)-(gamma(1)delta(1))(8). It depends on [4Fe-4S] cluster as a cofactor. [Ni-4Fe-4S] cluster serves as cofactor.

It carries out the reaction CO + 2 oxidized [2Fe-2S]-[ferredoxin] + H2O = 2 reduced [2Fe-2S]-[ferredoxin] + CO2 + 2 H(+). Its pathway is one-carbon metabolism; methanogenesis from acetate. Functionally, part of the ACDS complex that catalyzes the reversible cleavage of acetyl-CoA, allowing growth on acetate as sole source of carbon and energy. The alpha-epsilon subcomponent functions as a carbon monoxide dehydrogenase. This is Acetyl-CoA decarbonylase/synthase complex subunit alpha from Methanococcoides burtonii (strain DSM 6242 / NBRC 107633 / OCM 468 / ACE-M).